The primary structure comprises 363 residues: 3-dehydroquinate synthase (363 aa).

NAD(+)-binding positions include 103–107 (GAVGD), 127–128 (TT), Lys139, Lys148, and 166–169 (FSET). Zn(2+) contacts are provided by Glu181, His243, and His260.

This sequence belongs to the sugar phosphate cyclases superfamily. Dehydroquinate synthase family. Co(2+) serves as cofactor. The cofactor is Zn(2+). Requires NAD(+) as cofactor.

The protein localises to the cytoplasm. The enzyme catalyses 7-phospho-2-dehydro-3-deoxy-D-arabino-heptonate = 3-dehydroquinate + phosphate. Its pathway is metabolic intermediate biosynthesis; chorismate biosynthesis; chorismate from D-erythrose 4-phosphate and phosphoenolpyruvate: step 2/7. Its function is as follows. Catalyzes the conversion of 3-deoxy-D-arabino-heptulosonate 7-phosphate (DAHP) to dehydroquinate (DHQ). The protein is 3-dehydroquinate synthase of Lysinibacillus sphaericus (strain C3-41).